The following is a 433-amino-acid chain: Glutamate-1-semialdehyde 2,1-aminomutase (433 aa).

Lysine 269 is subject to N6-(pyridoxal phosphate)lysine.

Belongs to the class-III pyridoxal-phosphate-dependent aminotransferase family. HemL subfamily. As to quaternary structure, homodimer. Requires pyridoxal 5'-phosphate as cofactor.

It localises to the cytoplasm. The catalysed reaction is (S)-4-amino-5-oxopentanoate = 5-aminolevulinate. It participates in porphyrin-containing compound metabolism; protoporphyrin-IX biosynthesis; 5-aminolevulinate from L-glutamyl-tRNA(Glu): step 2/2. In Renibacterium salmoninarum (strain ATCC 33209 / DSM 20767 / JCM 11484 / NBRC 15589 / NCIMB 2235), this protein is Glutamate-1-semialdehyde 2,1-aminomutase.